We begin with the raw amino-acid sequence, 610 residues long: UvrABC system protein C (610 aa).

The region spanning 13-91 is the GIY-YIG domain; it reads HLPGVYRMYD…IKENQPKYNV (79 aa). The UVR domain maps to 201–236; the sequence is GQVVEHLVQKMENAAQELDFEAAARFRDQIQSVRAV.

Belongs to the UvrC family. As to quaternary structure, interacts with UvrB in an incision complex.

Its subcellular location is the cytoplasm. In terms of biological role, the UvrABC repair system catalyzes the recognition and processing of DNA lesions. UvrC both incises the 5' and 3' sides of the lesion. The N-terminal half is responsible for the 3' incision and the C-terminal half is responsible for the 5' incision. The protein is UvrABC system protein C of Actinobacillus pleuropneumoniae serotype 7 (strain AP76).